An 841-amino-acid chain; its full sequence is uncharacterized protein (841 aa).

The first 31 residues, 1-31 (MKIERYFKAIARAFIITFLFSLILQDNGVLA), serve as a signal peptide directing secretion.

The protein localises to the secreted. This is an uncharacterized protein from Schizosaccharomyces pombe (strain 972 / ATCC 24843) (Fission yeast).